We begin with the raw amino-acid sequence, 344 residues long: F-box protein HRT3 (344 aa).

One copy of the TPR repeat lies at 14–47 (AIAIWEKGVLKEKDGSMSDAINFYRSALKIHDNV). The F-box domain maps to 98-148 (WILEILPDDILLRIIKKVILMSGESWVNLSMTCSTFSKLCFHDSVPFKTFA).

Interacts with SKP1. Component of the probable SCF(HRT3) complex containing CDC53, SKP1, RBX1 and HRT3.

It participates in protein modification; protein ubiquitination. In terms of biological role, substrate recognition component of a SCF (SKP1-CUL1-F-box protein) E3 ubiquitin-protein ligase complex which mediates the ubiquitination and subsequent proteasomal degradation of target proteins. Probably recognizes and binds to phosphorylated target proteins. This is F-box protein HRT3 (HRT3) from Saccharomyces cerevisiae (strain ATCC 204508 / S288c) (Baker's yeast).